Here is a 363-residue protein sequence, read N- to C-terminus: Aspartate-semialdehyde dehydrogenase (363 aa).

Positions 15, 16, 17, 18, 40, 43, and 87 each coordinate NADP(+). Cys-154 acts as the Acyl-thioester intermediate in catalysis. Gly-186 is a binding site for NADP(+). Catalysis depends on His-251, which acts as the Proton acceptor. NADP(+) is bound at residue Asn-341.

Belongs to the aspartate-semialdehyde dehydrogenase family. In terms of assembly, homotetramer; dimer of dimers.

It is found in the cytoplasm. The protein localises to the cytosol. It localises to the nucleus. The catalysed reaction is L-aspartate 4-semialdehyde + phosphate + NADP(+) = 4-phospho-L-aspartate + NADPH + H(+). It participates in amino-acid biosynthesis; L-methionine biosynthesis via de novo pathway; L-homoserine from L-aspartate: step 2/3. It functions in the pathway amino-acid biosynthesis; L-threonine biosynthesis; L-threonine from L-aspartate: step 2/5. With respect to regulation, inhibited by 4-amino-3-hydroxynaphthalene-1-sulfonic acid and the competitive inhibitor 1,4-benzoquinone and derivates such as 2-chloro-3-methoxy-1,4-naphthoquinone, 2,3-dichloro-1,4-naphthoquinone, 2-chloro-1,4-naphthoquinone, 2-bromo-1,4-naphthoquinone and 2,3-dichloro-5,8-dihydroxy-1,4-naphthoquinone. Catalyzes the NADPH-dependent formation of L-aspartate 4-semialdehyde (L-ASA) by the reductive dephosphorylation of 4-phospho-L-aspartate. Mediates the second step in the biosynthesis of amino acids that derive from aspartate (the aspartate family of amino acids), including methioinine and threonine, the latter of which is a precursor to isoleucine. The sequence is that of Aspartate-semialdehyde dehydrogenase from Aspergillus fumigatus (strain ATCC MYA-4609 / CBS 101355 / FGSC A1100 / Af293) (Neosartorya fumigata).